A 261-amino-acid chain; its full sequence is Glucosamine-6-phosphate deaminase (261 aa).

Catalysis depends on Asp-67, which acts as the Proton acceptor; for enolization step. Catalysis depends on Asn-135, which acts as the For ring-opening step. Catalysis depends on His-137, which acts as the Proton acceptor; for ring-opening step. Glu-142 (for ring-opening step) is an active-site residue.

Belongs to the glucosamine/galactosamine-6-phosphate isomerase family. NagB subfamily. Homohexamer.

It catalyses the reaction alpha-D-glucosamine 6-phosphate + H2O = beta-D-fructose 6-phosphate + NH4(+). Its pathway is amino-sugar metabolism; N-acetylneuraminate degradation; D-fructose 6-phosphate from N-acetylneuraminate: step 5/5. In terms of biological role, catalyzes the reversible isomerization-deamination of glucosamine 6-phosphate (GlcN6P) to form fructose 6-phosphate (Fru6P) and ammonium ion. The protein is Glucosamine-6-phosphate deaminase of Hahella chejuensis (strain KCTC 2396).